A 451-amino-acid chain; its full sequence is Exodeoxyribonuclease 7 large subunit (451 aa).

Belongs to the XseA family. As to quaternary structure, heterooligomer composed of large and small subunits.

The protein localises to the cytoplasm. It carries out the reaction Exonucleolytic cleavage in either 5'- to 3'- or 3'- to 5'-direction to yield nucleoside 5'-phosphates.. In terms of biological role, bidirectionally degrades single-stranded DNA into large acid-insoluble oligonucleotides, which are then degraded further into small acid-soluble oligonucleotides. The chain is Exodeoxyribonuclease 7 large subunit from Neisseria gonorrhoeae (strain ATCC 700825 / FA 1090).